A 178-amino-acid chain; its full sequence is Translation initiation factor IF-3 (178 aa).

The protein belongs to the IF-3 family. As to quaternary structure, monomer.

The protein resides in the cytoplasm. Functionally, IF-3 binds to the 30S ribosomal subunit and shifts the equilibrium between 70S ribosomes and their 50S and 30S subunits in favor of the free subunits, thus enhancing the availability of 30S subunits on which protein synthesis initiation begins. This chain is Translation initiation factor IF-3, found in Picosynechococcus sp. (strain ATCC 27264 / PCC 7002 / PR-6) (Agmenellum quadruplicatum).